We begin with the raw amino-acid sequence, 225 residues long: Urease accessory protein UreE (225 aa).

Residues 171–215 (HHGHEHSHDHEHGHSHAAHEHSHGHDHTHGHDHDHGDHVHDESCG) are compositionally biased toward basic and acidic residues. Residues 171–225 (HHGHEHSHDHEHGHSHAAHEHSHGHDHTHGHDHDHGDHVHDESCGHGHHHHHAHR) form a disordered region. The segment covering 216 to 225 (HGHHHHHAHR) has biased composition (basic residues).

This sequence belongs to the UreE family.

It is found in the cytoplasm. Involved in urease metallocenter assembly. Binds nickel. Probably functions as a nickel donor during metallocenter assembly. The polypeptide is Urease accessory protein UreE (Paraburkholderia xenovorans (strain LB400)).